Consider the following 837-residue polypeptide: Striatin-interacting protein 1 (837 aa).

M1 is subject to N-acetylmethionine. Disordered stretches follow at residues 1–67 (MEPA…ESPD) and 333–423 (AASP…KGLP). The segment covering 18-35 (PQPPPPPPPATAQPPPGA) has biased composition (pro residues). Basic and acidic residues predominate over residues 47–60 (KAREFNRNQRKDSE). 3 positions are modified to phosphoserine: S59, S335, and S339. Basic and acidic residues predominate over residues 356–377 (KALIKQDNLDAFNERDPYKADD). Positions 378-391 (SREEEEENDDDSSL) are enriched in acidic residues. Phosphoserine is present on S788. The tract at residues 796–837 (DNCLQSVLGQRVDLPEDFQMNYDLWLEREVFSKPISWEELLQ) is required for STRIPAK core complex formation.

It belongs to the STRIP family. In terms of assembly, part of the core of STRIPAK complexes composed of PP2A catalytic and scaffolding subunits, the striatins (PP2A regulatory subunits), the striatin-associated proteins MOB4, STRIP1 and STRIP2, PDCD10 and members of the STE20 kinases, such as STK24 and STK26. The STRIPAK complex can be extended by adapter proteins such as SLMAP:SIKE1, CTTNBP2 or CTTNBP2NL. Interacts with CDC42BPB. Interacts with CTTNBP2NL.

Its subcellular location is the cytoplasm. Its function is as follows. Plays a role in the regulation of cell morphology and cytoskeletal organization. Required in the cortical actin filament dynamics and cell shape. Part of the striatin-interacting phosphatase and kinase (STRIPAK) complexes. STRIPAK complexes have critical roles in protein (de)phosphorylation and are regulators of multiple signaling pathways including Hippo, MAPK, nuclear receptor and cytoskeleton remodeling. Different types of STRIPAK complexes are involved in a variety of biological processes such as cell growth, differentiation, apoptosis, metabolism and immune regulation. In Mus musculus (Mouse), this protein is Striatin-interacting protein 1 (Strip1).